A 353-amino-acid chain; its full sequence is Photosystem II protein D1 (353 aa).

Position 2 is an N-acetylthreonine (T2). T2 carries the post-translational modification Phosphothreonine. 3 helical membrane passes run 29 to 46 (YIGW…TATS), 118 to 133 (HFLL…EWEL), and 142 to 156 (WIAV…AATA). H118 lines the chlorophyll a pocket. Residue Y126 coordinates pheophytin a. 2 residues coordinate [CaMn4O5] cluster: D170 and E189. Residues 197 to 218 (FHMLGVAGVFGGSLFSAMHGSL) traverse the membrane as a helical segment. H198 provides a ligand contact to chlorophyll a. Residues H215 and 264–265 (SF) contribute to the a quinone site. H215 provides a ligand contact to Fe cation. Residue H272 coordinates Fe cation. The helical transmembrane segment at 274 to 288 (FLAAWPVVGIWFTAL) threads the bilayer. Residues H332, E333, and A344 each contribute to the [CaMn4O5] cluster site. Positions 345-353 (AIEAPAVNG) are excised as a propeptide.

This sequence belongs to the reaction center PufL/M/PsbA/D family. As to quaternary structure, PSII is composed of 1 copy each of membrane proteins PsbA, PsbB, PsbC, PsbD, PsbE, PsbF, PsbH, PsbI, PsbJ, PsbK, PsbL, PsbM, PsbT, PsbX, PsbY, PsbZ, Psb30/Ycf12, at least 3 peripheral proteins of the oxygen-evolving complex and a large number of cofactors. It forms dimeric complexes. Requires The D1/D2 heterodimer binds P680, chlorophylls that are the primary electron donor of PSII, and subsequent electron acceptors. It shares a non-heme iron and each subunit binds pheophytin, quinone, additional chlorophylls, carotenoids and lipids. D1 provides most of the ligands for the Mn4-Ca-O5 cluster of the oxygen-evolving complex (OEC). There is also a Cl(-1) ion associated with D1 and D2, which is required for oxygen evolution. The PSII complex binds additional chlorophylls, carotenoids and specific lipids. as cofactor. Tyr-161 forms a radical intermediate that is referred to as redox-active TyrZ, YZ or Y-Z. Post-translationally, C-terminally processed by CTPA; processing is essential to allow assembly of the oxygen-evolving complex and thus photosynthetic growth.

The protein localises to the plastid. It localises to the chloroplast thylakoid membrane. The catalysed reaction is 2 a plastoquinone + 4 hnu + 2 H2O = 2 a plastoquinol + O2. Its function is as follows. Photosystem II (PSII) is a light-driven water:plastoquinone oxidoreductase that uses light energy to abstract electrons from H(2)O, generating O(2) and a proton gradient subsequently used for ATP formation. It consists of a core antenna complex that captures photons, and an electron transfer chain that converts photonic excitation into a charge separation. The D1/D2 (PsbA/PsbD) reaction center heterodimer binds P680, the primary electron donor of PSII as well as several subsequent electron acceptors. The sequence is that of Photosystem II protein D1 from Conocephalum japonicum (Liverwort).